The primary structure comprises 191 residues: Protein Ves (191 aa).

It belongs to the Ves family.

This Escherichia fergusonii (strain ATCC 35469 / DSM 13698 / CCUG 18766 / IAM 14443 / JCM 21226 / LMG 7866 / NBRC 102419 / NCTC 12128 / CDC 0568-73) protein is Protein Ves.